The chain runs to 451 residues: Phosphoglucosamine mutase (451 aa).

The Phosphoserine intermediate role is filled by S102. 4 residues coordinate Mg(2+): S102, D244, D246, and D248. S102 is modified (phosphoserine).

This sequence belongs to the phosphohexose mutase family. It depends on Mg(2+) as a cofactor. Post-translationally, activated by phosphorylation.

The enzyme catalyses alpha-D-glucosamine 1-phosphate = D-glucosamine 6-phosphate. Its function is as follows. Catalyzes the conversion of glucosamine-6-phosphate to glucosamine-1-phosphate. In Lawsonia intracellularis (strain PHE/MN1-00), this protein is Phosphoglucosamine mutase.